The following is a 291-amino-acid chain: Porphobilinogen deaminase (291 aa).

At C237 the chain carries S-(dipyrrolylmethanemethyl)cysteine.

This sequence belongs to the HMBS family. As to quaternary structure, monomer. Requires dipyrromethane as cofactor.

It carries out the reaction 4 porphobilinogen + H2O = hydroxymethylbilane + 4 NH4(+). It functions in the pathway porphyrin-containing compound metabolism; protoporphyrin-IX biosynthesis; coproporphyrinogen-III from 5-aminolevulinate: step 2/4. Its function is as follows. Tetrapolymerization of the monopyrrole PBG into the hydroxymethylbilane pre-uroporphyrinogen in several discrete steps. The polypeptide is Porphobilinogen deaminase (Clostridium acetobutylicum (strain ATCC 824 / DSM 792 / JCM 1419 / IAM 19013 / LMG 5710 / NBRC 13948 / NRRL B-527 / VKM B-1787 / 2291 / W)).